Here is a 253-residue protein sequence, read N- to C-terminus: 5'-nucleotidase SurE (253 aa).

Positions 8, 9, 39, and 96 each coordinate a divalent metal cation.

It belongs to the SurE nucleotidase family. A divalent metal cation is required as a cofactor.

Its subcellular location is the cytoplasm. It carries out the reaction a ribonucleoside 5'-phosphate + H2O = a ribonucleoside + phosphate. Functionally, nucleotidase that shows phosphatase activity on nucleoside 5'-monophosphates. In Rhodopirellula baltica (strain DSM 10527 / NCIMB 13988 / SH1), this protein is 5'-nucleotidase SurE.